Here is a 71-residue protein sequence, read N- to C-terminus: Long neurotoxin 1 (71 aa).

Cystine bridges form between Cys-3–Cys-20, Cys-14–Cys-41, Cys-26–Cys-30, Cys-45–Cys-56, and Cys-57–Cys-62.

It belongs to the three-finger toxin family. Long-chain subfamily. Type II alpha-neurotoxin sub-subfamily. In terms of tissue distribution, expressed by the venom gland.

Its subcellular location is the secreted. Binds with high affinity to muscular (alpha-1/CHRNA1) and neuronal (alpha-7/CHRNA7) nicotinic acetylcholine receptor (nAChR) and hinders acetylcholine binding to the receptor, thereby impairing neuromuscular and neuronal transmission. The chain is Long neurotoxin 1 from Naja annulata annulata (Banded water cobra).